The following is a 131-amino-acid chain: DNA-directed RNA polymerase subunit omega (131 aa).

The segment at 78–131 (DEPEAEAVPALSSAPDAAQSDAMGDVQFDRMTEEDLLRGLEGLVPPAATDDDGE) is disordered. Residues 104–115 (QFDRMTEEDLLR) are compositionally biased toward basic and acidic residues.

This sequence belongs to the RNA polymerase subunit omega family. As to quaternary structure, the RNAP catalytic core consists of 2 alpha, 1 beta, 1 beta' and 1 omega subunit. When a sigma factor is associated with the core the holoenzyme is formed, which can initiate transcription.

The enzyme catalyses RNA(n) + a ribonucleoside 5'-triphosphate = RNA(n+1) + diphosphate. Promotes RNA polymerase assembly. Latches the N- and C-terminal regions of the beta' subunit thereby facilitating its interaction with the beta and alpha subunits. The chain is DNA-directed RNA polymerase subunit omega from Beijerinckia indica subsp. indica (strain ATCC 9039 / DSM 1715 / NCIMB 8712).